The chain runs to 76 residues: Exodeoxyribonuclease 7 small subunit (76 aa).

The protein belongs to the XseB family. Heterooligomer composed of large and small subunits.

It is found in the cytoplasm. The enzyme catalyses Exonucleolytic cleavage in either 5'- to 3'- or 3'- to 5'-direction to yield nucleoside 5'-phosphates.. Functionally, bidirectionally degrades single-stranded DNA into large acid-insoluble oligonucleotides, which are then degraded further into small acid-soluble oligonucleotides. This is Exodeoxyribonuclease 7 small subunit from Bacillus mycoides (strain KBAB4) (Bacillus weihenstephanensis).